The primary structure comprises 79 residues: U16-theraphotoxin-Cg1a (79 aa).

Positions 1–19 (MRALLIIAGLALFLVVCNA) are cleaved as a signal peptide. A propeptide spanning residues 20–44 (SQVNEQRKLNEMLSVMFAVEEPQER) is cleaved from the precursor. Disulfide bonds link C47–C62, C54–C67, and C61–C74.

The protein belongs to the neurotoxin 10 (Hwtx-1) family. 34 (Jztx-26) subfamily. Expressed by the venom gland.

It localises to the secreted. Functionally, probable ion channel inhibitor. The polypeptide is U16-theraphotoxin-Cg1a (Chilobrachys guangxiensis (Chinese earth tiger tarantula)).